The chain runs to 240 residues: Regulatory protein HlyX (240 aa).

The essential for the oxygen-regulated activity stretch occupies residues 15–28 (CTIHCQNCSISQLC). Residues 163 to 236 (MSAEEKLAAF…GKYITINRMD (74 aa)) enclose the HTH crp-type domain. A DNA-binding region (H-T-H motif) is located at residues 196–215 (RGDIGNYLGLTIETISRLLG).

Its subcellular location is the cytoplasm. Its function is as follows. Confers a hemolytic phenotype on E.coli. May regulate, rather than mediate, hemolytic activity. The chain is Regulatory protein HlyX (hlyX) from Actinobacillus pleuropneumoniae (Haemophilus pleuropneumoniae).